We begin with the raw amino-acid sequence, 970 residues long: uncharacterized protein (970 aa).

A helical transmembrane segment spans residues 11–31 (WILKIGTILGLVCLGLFGVIF). The interval 366-387 (ASNSNDNNNQNNNNNNNSSDVI) is disordered. The segment covering 367–387 (SNSNDNNNQNNNNNNNSSDVI) has biased composition (low complexity). 11 consecutive transmembrane segments (helical) span residues 515–535 (FASS…LLTL), 537–557 (YKLL…SSLV), 558–578 (IFSA…FFVI), 614–634 (FFAN…VIYL), 645–665 (LMAI…IVLI), 726–746 (FLFV…LYLV), 762–782 (SNGI…YCLI), 789–809 (CLSY…VMYL), 816–836 (IDQS…FFAA), 877–897 (IESS…FGGI), and 903–923 (LVIF…AFLP).

It is found in the cell membrane. This is an uncharacterized protein from Mycoplasma genitalium (strain ATCC 33530 / DSM 19775 / NCTC 10195 / G37) (Mycoplasmoides genitalium).